We begin with the raw amino-acid sequence, 198 residues long: Recombination protein RecR (198 aa).

Residues C57–C72 form a C4-type zinc finger. The Toprim domain maps to A80 to P175.

It belongs to the RecR family.

In terms of biological role, may play a role in DNA repair. It seems to be involved in an RecBC-independent recombinational process of DNA repair. It may act with RecF and RecO. This chain is Recombination protein RecR, found in Herminiimonas arsenicoxydans.